We begin with the raw amino-acid sequence, 909 residues long: Coatomer subunit beta'-3 (909 aa).

WD repeat units lie at residues 13–52 (QRSE…ITKS), 55–94 (VTEL…KVKV), 97–136 (AHSD…ACTQ), 140–180 (GHSH…PNFT), 183–224 (AHQK…CVQT), 227–266 (GHTH…LENT), 269–309 (YGLE…ASMD), 351–390 (TCDL…RSFG), and 461–501 (QIDV…SHFD). Positions 862–909 (EENGHVENEGDEEEQQEEEVNEEEGVVDADSTDGAVLVNGSEVLTPHP) are disordered. The span at 870 to 892 (EGDEEEQQEEEVNEEEGVVDADS) shows a compositional bias: acidic residues.

This sequence belongs to the WD repeat COPB2 family. As to quaternary structure, oligomeric complex that consists of at least the alpha, beta, beta', gamma, delta, epsilon and zeta subunits.

The protein resides in the cytoplasm. Its subcellular location is the golgi apparatus membrane. The protein localises to the cytoplasmic vesicle. It is found in the COPI-coated vesicle membrane. In terms of biological role, the coatomer is a cytosolic protein complex that binds to dilysine motifs and reversibly associates with Golgi non-clathrin-coated vesicles, which further mediate biosynthetic protein transport from the ER, via the Golgi up to the trans Golgi network. Coatomer complex is required for budding from Golgi membranes, and is essential for the retrograde Golgi-to-ER transport of dilysine-tagged proteins. The polypeptide is Coatomer subunit beta'-3 (Arabidopsis thaliana (Mouse-ear cress)).